Consider the following 165-residue polypeptide: Transcription elongation factor A protein-like 1 (165 aa).

Disordered stretches follow at residues methionine 1–glutamate 66 and isoleucine 89–histidine 124. Residues cysteine 33–leucine 60 show a composition bias toward acidic residues. Over residues histidine 101–histidine 124 the composition is skewed to basic and acidic residues.

The protein belongs to the TFS-II family. TFA subfamily.

The protein resides in the nucleus. Its function is as follows. May be involved in transcriptional regulation. Modulates various viral and cellular promoters in a promoter context-dependent manner. Does not bind DNA directly. This chain is Transcription elongation factor A protein-like 1, found in Rattus norvegicus (Rat).